Here is a 326-residue protein sequence, read N- to C-terminus: D-amino-acid oxidase (326 aa).

Residues glycine 14, valine 15, isoleucine 16, aspartate 36, serine 44, alanine 48, alanine 49, isoleucine 50, and valine 157 each coordinate FAD. Residues tyrosine 219 and arginine 274 each coordinate D-proline. Positions 219 and 274 each coordinate D-serine. Residues arginine 274, glycine 299, glycine 300, glycine 302, and threonine 304 each coordinate FAD. A D-proline-binding site is contributed by glycine 300. Glycine 300 serves as a coordination point for D-serine.

Belongs to the DAMOX/DASOX family. Homodimer. It depends on FAD as a cofactor.

The protein localises to the cytoplasm. Its subcellular location is the secreted. It is found in the cell wall. The enzyme catalyses a D-alpha-amino acid + O2 + H2O = a 2-oxocarboxylate + H2O2 + NH4(+). It carries out the reaction D-phenylalanine + O2 + H2O = 3-phenylpyruvate + H2O2 + NH4(+). The catalysed reaction is D-lysine + O2 + H2O = 6-amino-2-oxohexanoate + H2O2 + NH4(+). It catalyses the reaction D-methionine + O2 + H2O = 4-methylsulfanyl-2-oxobutanoate + H2O2 + NH4(+). The enzyme catalyses D-arginine + O2 + H2O = 5-guanidino-2-oxopentanoate + H2O2 + NH4(+). It carries out the reaction D-ornithine + O2 + H2O = 5-amino-2-oxopentanoate + H2O2 + NH4(+). The catalysed reaction is D-leucine + O2 + H2O = 4-methyl-2-oxopentanoate + H2O2 + NH4(+). It catalyses the reaction D-alanine + O2 + H2O = pyruvate + H2O2 + NH4(+). The enzyme catalyses D-valine + O2 + H2O = 3-methyl-2-oxobutanoate + H2O2 + NH4(+). It carries out the reaction D-histidine + O2 + H2O = 3-(imidazol-5-yl)pyruvate + H2O2 + NH4(+). Catalyzes the oxidative deamination of D-amino acids with broad substrate specificity. This is D-amino-acid oxidase from Glutamicibacter protophormiae (Brevibacterium protophormiae).